We begin with the raw amino-acid sequence, 628 residues long: Chaperone protein HtpG (628 aa).

The a; substrate-binding stretch occupies residues 1–334 (MTTIDTASET…SEDLPLNLSR (334 aa)). The b stretch occupies residues 335 to 550 (EMLQNNPQLA…GFGPDRELEK (216 aa)). Residues 551-628 (MLARANKGAA…LVLRGVVAHG (78 aa)) form a c region.

It belongs to the heat shock protein 90 family. As to quaternary structure, homodimer.

It is found in the cytoplasm. Its function is as follows. Molecular chaperone. Has ATPase activity. The sequence is that of Chaperone protein HtpG from Rhodopseudomonas palustris (strain HaA2).